A 1178-amino-acid chain; its full sequence is Pyruvate carboxylase 1 (1178 aa).

Residues 18–470 (EKNKILVANR…WTTFIDDTPQ (453 aa)) enclose the Biotin carboxylation domain. ATP contacts are provided by Lys-136, Glu-220, and His-255. The ATP-grasp domain maps to 140-337 (RNLAAKANVP…IVAAQIQIAA (198 aa)). Residue Arg-312 is part of the active site. The region spanning 557–824 (TLLMDTTWRD…DTGINVEHVR (268 aa)) is the Pyruvate carboxyltransferase domain. Residues 565-569 (RDAHQ) and Arg-638 each bind substrate. Asp-566 lines the a divalent metal cation pocket. The a divalent metal cation site is built by Lys-734, His-764, and His-766. At Lys-734 the chain carries N6-carboxylysine. Residue Thr-898 participates in substrate binding. The 76-residue stretch at 1094–1169 (KADMHDPLHI…DSSDLLVLLE (76 aa)) folds into the Biotinyl-binding domain. Lys-1135 bears the N6-biotinyllysine mark.

Homotetramer. Biotin serves as cofactor. Requires Zn(2+) as cofactor.

It is found in the cytoplasm. It carries out the reaction hydrogencarbonate + pyruvate + ATP = oxaloacetate + ADP + phosphate + H(+). It participates in carbohydrate biosynthesis; gluconeogenesis. Its function is as follows. Pyruvate carboxylase catalyzes a 2-step reaction, involving the ATP-dependent carboxylation of the covalently attached biotin in the first step and the transfer of the carboxyl group to pyruvate in the second. This is Pyruvate carboxylase 1 (PYC1) from Saccharomyces cerevisiae (strain ATCC 204508 / S288c) (Baker's yeast).